Consider the following 246-residue polypeptide: 23S rRNA (guanosine-2'-O-)-methyltransferase RlmB (246 aa).

Gly-196, Ile-216, and Leu-225 together coordinate S-adenosyl-L-methionine.

It belongs to the class IV-like SAM-binding methyltransferase superfamily. RNA methyltransferase TrmH family. RlmB subfamily. In terms of assembly, homodimer.

The protein localises to the cytoplasm. It carries out the reaction guanosine(2251) in 23S rRNA + S-adenosyl-L-methionine = 2'-O-methylguanosine(2251) in 23S rRNA + S-adenosyl-L-homocysteine + H(+). Specifically methylates the ribose of guanosine 2251 in 23S rRNA. The sequence is that of 23S rRNA (guanosine-2'-O-)-methyltransferase RlmB from Yersinia pestis.